A 129-amino-acid polypeptide reads, in one-letter code: Small ribosomal subunit protein uS11 (129 aa).

Belongs to the universal ribosomal protein uS11 family. As to quaternary structure, part of the 30S ribosomal subunit. Interacts with proteins S7 and S18. Binds to IF-3.

In terms of biological role, located on the platform of the 30S subunit, it bridges several disparate RNA helices of the 16S rRNA. Forms part of the Shine-Dalgarno cleft in the 70S ribosome. This Xanthobacter autotrophicus (strain ATCC BAA-1158 / Py2) protein is Small ribosomal subunit protein uS11.